The primary structure comprises 103 residues: Large ribosomal subunit protein bL21 (103 aa).

Belongs to the bacterial ribosomal protein bL21 family. As to quaternary structure, part of the 50S ribosomal subunit. Contacts protein L20.

Functionally, this protein binds to 23S rRNA in the presence of protein L20. This is Large ribosomal subunit protein bL21 from Actinobacillus pleuropneumoniae serotype 5b (strain L20).